The following is a 294-amino-acid chain: Nucleotide-binding protein LVIS_0651 (294 aa).

12-19 (GMSGAGKT) serves as a coordination point for ATP. Position 62 to 65 (62 to 65 (DLRS)) interacts with GTP.

It belongs to the RapZ-like family.

Its function is as follows. Displays ATPase and GTPase activities. The polypeptide is Nucleotide-binding protein LVIS_0651 (Levilactobacillus brevis (strain ATCC 367 / BCRC 12310 / CIP 105137 / JCM 1170 / LMG 11437 / NCIMB 947 / NCTC 947) (Lactobacillus brevis)).